Consider the following 308-residue polypeptide: Cytochrome b (308 aa).

The next 4 helical transmembrane spans lie at 1 to 21, 45 to 66, 81 to 101, and 146 to 166; these read FGSL…LLAT, WLIR…YIHI, WNVG…GYVL, and FFAL…VHLT. H51 and H65 together coordinate heme b. Heme b contacts are provided by H150 and H164. Residue H169 coordinates a ubiquinone. The next 3 helical transmembrane spans lie at 194-214, 256-276, and 288-308; these read MKDI…ALFS, LGGV…PLLH, and LSQI…WVGS.

This sequence belongs to the cytochrome b family. As to quaternary structure, the cytochrome bc1 complex contains 11 subunits: 3 respiratory subunits (MT-CYB, CYC1 and UQCRFS1), 2 core proteins (UQCRC1 and UQCRC2) and 6 low-molecular weight proteins (UQCRH/QCR6, UQCRB/QCR7, UQCRQ/QCR8, UQCR10/QCR9, UQCR11/QCR10 and a cleavage product of UQCRFS1). This cytochrome bc1 complex then forms a dimer. Heme b serves as cofactor.

The protein resides in the mitochondrion inner membrane. Functionally, component of the ubiquinol-cytochrome c reductase complex (complex III or cytochrome b-c1 complex) that is part of the mitochondrial respiratory chain. The b-c1 complex mediates electron transfer from ubiquinol to cytochrome c. Contributes to the generation of a proton gradient across the mitochondrial membrane that is then used for ATP synthesis. The polypeptide is Cytochrome b (MT-CYB) (Ptiloprora plumbea (Leaden honeyeater)).